A 233-amino-acid chain; its full sequence is Small heat shock protein hspF (233 aa).

The sHSP domain maps to 129–233 (IPLFTFFEPL…ILLITVNKFL (105 aa)).

This sequence belongs to the small heat shock protein (HSP20) family.

The chain is Small heat shock protein hspF (hspF-1) from Dictyostelium discoideum (Social amoeba).